A 504-amino-acid polypeptide reads, in one-letter code: Cytochrome P450 monooxygenase iccC (504 aa).

Residues 7 to 26 (LPWILLYTGFLAIFLSRLFS) traverse the membrane as a helical segment. 4 N-linked (GlcNAc...) asparagine glycosylation sites follow: N134, N312, N365, and N374. C452 lines the heme pocket. N-linked (GlcNAc...) asparagine glycosylation occurs at N494.

This sequence belongs to the cytochrome P450 family. It depends on heme as a cofactor.

It localises to the membrane. The catalysed reaction is (3E,5S)-3-[(2E,4E,8S,10E,12Z)-1-hydroxy-4,8-dimethyltetradeca-2,4,10,12-tetraen-1-ylidene]-5-[(4-hydroxyphenyl)methyl]pyrrolidine-2,4-dione + reduced [NADPH--hemoprotein reductase] + O2 = 3-[(2E,4E,8S,10E,12Z)-4,8-dimethyltetradeca-2,4,10,12-tetraenoyl]-4-hydroxy-5-(4-hydroxyphenyl)-1,2-dihydropyridin-2-one + oxidized [NADPH--hemoprotein reductase] + 2 H2O. It functions in the pathway mycotoxin biosynthesis. Functionally, cytochrome P450 monooxygenase; part of the gene cluster that mediates the biosynthesis of ilicicolin H, a 4-hydroxy-2-pyridonealkaloid that has potent and broad antifungal activities by inhibiting the mitochondrial respiration chain. IccC catalyzes the ring expansion of the tetramate intermediate to the acyclic 2-pyridone intermediate that contains the trans bis-diene chain. The biosynthesis of ilicicolin H starts with formation of the tetramic acid by the hybrid PKS-NRPS synthetase iccA with the partnering trans-enoyl reductase iccB since iccA lacks a designated enoylreductase (ER) domain. The cytochrome P450 monooxygenase iccC then catalyzes the ring expansion of the tetramate to the acyclic 2-pyridone. The pericyclase iccD further converts the acyclic 2-pyridone into 8-epi-ilicicolin H. Finally, the epimerase iccE converts 8-epi-ilicicolin H into ilicicolin H via epimerization. IccA to iccE are sufficient for ilicicolin H biosynthesis and the roles of the remaining enzymes, iccF, iccG and iccH within the pathway have still to be determined. This chain is Cytochrome P450 monooxygenase iccC, found in Talaromyces variabilis (Penicillium variabile).